The following is a 91-amino-acid chain: Probable Fe(2+)-trafficking protein (91 aa).

This sequence belongs to the Fe(2+)-trafficking protein family.

Functionally, could be a mediator in iron transactions between iron acquisition and iron-requiring processes, such as synthesis and/or repair of Fe-S clusters in biosynthetic enzymes. The chain is Probable Fe(2+)-trafficking protein from Thiobacillus denitrificans (strain ATCC 25259 / T1).